Consider the following 855-residue polypeptide: Endochitinase 2 (855 aa).

A signal peptide spans 1-22 (MGPTNILAAFIAVSSLFIQSLA). Residues 29 to 340 (SNLAVYWGQG…DIMKEVLLRC (312 aa)) enclose the GH18 domain. N-linked (GlcNAc...) asparagine glycosylation occurs at asparagine 90. Glutamate 175 (proton donor) is an active-site residue. The tract at residues 341-672 (DPDPPTSTVT…APSSSTTEDR (332 aa)) is disordered. The span at 346-400 (TSTVTSTTSASTSTQTSSQSTTMETKTLSASTTPSSPSTVSPSSTMQTTSTGSTS) shows a compositional bias: low complexity. Polar residues predominate over residues 401–456 (IETVTTRSQEPPSTTISTRSASTEPVTTRSQEPPSTTISTRSASTETVTTRSQEPP). Positions 457-483 (STTISTWSASTETSTSSQDSPSTTIST) are enriched in low complexity. Over residues 484–521 (KSAPTGTVTTRSQDLPSTTISTRSPETETETATTKSQG) the composition is skewed to polar residues. The span at 522–533 (SPSITLSTRSSS) shows a compositional bias: low complexity. The segment covering 534-555 (AETVSTRSQHSSSTTISTKSAP) has biased composition (polar residues). Residues 556-567 (TETGTTSEHSTS) show a composition bias toward low complexity. Polar residues predominate over residues 568-641 (MPVSTRSAST…SQTPTTIITG (74 aa)). 2 stretches are compositionally biased toward low complexity: residues 642 to 652 (TPSDPVSAPTT) and 659 to 672 (TLTLAPSSSTTEDR). Glycine 826 is lipidated: GPI-anchor amidated glycine. Positions 827-855 (SAMTVRSMDVVAKALITAGAAVLGLFLGL) are cleaved as a propeptide — removed in mature form.

The protein belongs to the glycosyl hydrolase 18 family. Chitinase class III subfamily.

The protein localises to the cell membrane. The enzyme catalyses Random endo-hydrolysis of N-acetyl-beta-D-glucosaminide (1-&gt;4)-beta-linkages in chitin and chitodextrins.. Its function is as follows. May be associated with endosporulation. The chain is Endochitinase 2 (CTS2) from Coccidioides posadasii (strain C735) (Valley fever fungus).